We begin with the raw amino-acid sequence, 38 residues long: MIEPLLLGIVLGLIPITLAGLFVAAYLQYKRGNQLNLE.

The helical transmembrane segment at 5 to 25 threads the bilayer; it reads LLLGIVLGLIPITLAGLFVAA.

The protein belongs to the PetG family. In terms of assembly, the 4 large subunits of the cytochrome b6-f complex are cytochrome b6, subunit IV (17 kDa polypeptide, PetD), cytochrome f and the Rieske protein, while the 4 small subunits are PetG, PetL, PetM and PetN. The complex functions as a dimer.

Its subcellular location is the cellular thylakoid membrane. Component of the cytochrome b6-f complex, which mediates electron transfer between photosystem II (PSII) and photosystem I (PSI), cyclic electron flow around PSI, and state transitions. PetG is required for either the stability or assembly of the cytochrome b6-f complex. In Crocosphaera subtropica (strain ATCC 51142 / BH68) (Cyanothece sp. (strain ATCC 51142)), this protein is Cytochrome b6-f complex subunit 5.